A 397-amino-acid polypeptide reads, in one-letter code: Digeranylgeranylglycerophospholipid reductase 1 (397 aa).

Positions 18, 37, 48, 49, 51, 104, 128, 284, 296, and 297 each coordinate FAD.

It belongs to the geranylgeranyl reductase family. DGGGPL reductase subfamily. Requires FAD as cofactor.

The enzyme catalyses a 2,3-bis-O-phytanyl-sn-glycerol 1-phospholipid + 8 A = a 2,3-bis-O-(geranylgeranyl)-sn-glycerol 1-phospholipid + 8 AH2. It carries out the reaction 2,3-bis-O-(phytanyl)-sn-glycerol 1-phosphate + 8 A = 2,3-bis-O-(geranylgeranyl)-sn-glycerol 1-phosphate + 8 AH2. The catalysed reaction is CDP-2,3-bis-O-(geranylgeranyl)-sn-glycerol + 8 AH2 = CDP-2,3-bis-O-(phytanyl)-sn-glycerol + 8 A. It catalyses the reaction archaetidylserine + 8 AH2 = 2,3-bis-O-phytanyl-sn-glycero-3-phospho-L-serine + 8 A. It functions in the pathway membrane lipid metabolism; glycerophospholipid metabolism. In terms of biological role, is involved in the reduction of 2,3-digeranylgeranylglycerophospholipids (unsaturated archaeols) into 2,3-diphytanylglycerophospholipids (saturated archaeols) in the biosynthesis of archaeal membrane lipids. Catalyzes the formation of archaetidic acid (2,3-di-O-phytanyl-sn-glyceryl phosphate) from 2,3-di-O-geranylgeranylglyceryl phosphate (DGGGP) via the hydrogenation of each double bond of the isoprenoid chains. Is also probably able to reduce double bonds of geranyl groups in CDP-2,3-bis-O-(geranylgeranyl)-sn-glycerol and archaetidylserine, thus acting at various stages in the biosynthesis of archaeal membrane lipids. In Methanothermobacter thermautotrophicus (strain ATCC 29096 / DSM 1053 / JCM 10044 / NBRC 100330 / Delta H) (Methanobacterium thermoautotrophicum), this protein is Digeranylgeranylglycerophospholipid reductase 1.